Consider the following 247-residue polypeptide: Nodulation protein H (247 aa).

The hydrophobic stretch occupies residues methionine 1 to methionine 16.

In terms of biological role, required for the formation of sulfated nod factor. Proposed to transfer activated sulfate (PAPS) to a N-acetylglucosamine of the nod factor. The polypeptide is Nodulation protein H (nodH) (Rhizobium meliloti (Ensifer meliloti)).